The sequence spans 644 residues: MYKIYSYLGWRIDMKTENLPQAGQEAQIDKKIHFIWVGHIMPQKNIQVVSEWAEKNPGYETIIWVDKKIAPAKELDLFILDMKSKGITVKDINEEGVCRDSIRHELDQESPNYGMVSDMLRLNILAAEGGIYLDSDILCSAPFPDEIYAPFGFLLSPWSQGANNTLCNDIILCSKGNQIIQQLADAIEQSYIARDSFEFTHEYASMKETKGERIAKTLGVTGPGFLFHQLKKMGILNDKSEMEAIHWELQDQRYLIDGSVKEPDYFYVPQNNTNDASWVPSIKRPGIENMSFQERLENAVQLIAFDIQKTGLFNLDHYANELKVKQNSWCIAAETSPELKPDSYLLIRPRDKTGEWTLYYVDEDKKLNPVTLPVIKGAIKLSEVSDPLRKFHTLLSQVSDPVNPTAHELKQIGRALIELKPRQDEWHCKNKWSGAEEIAQELWQRITSNETLRAQIKQCFTQFESLKPRVAELGLTRASGAGTEVEAHESTVKEQEIISQNTVGEEGTKEKNSVQLASENSSDEKIKTAHDLIDEIIQDVIQLDGKLGLLGGNTRQLEDGRVINIPNGAAMIFDDYKKYKQGELTAESALESMIKIAKLSNQLNRHTFFNQRQPETGQFYKKVAAIDLQTTIAAEYDNNHGLRI.

The glucosyltransferase stretch occupies residues 1 to 400 (MYKIYSYLGW…FHTLLSQVSD (400 aa)). The interval 401–644 (PVNPTAHELK…EYDNNHGLRI (244 aa)) is ptdIns(3)P-binding and localization domain.

In terms of processing, ubiquitinated and polyubiquitinated when ectopically produced in both yeast and mammalian cells; however it is unsure if this modification occurs during the L.pneumophila infection of host cells.

The protein resides in the secreted. In terms of biological role, secreted effector that interferes with vesicular trafficking of host cells. Possesses glucohydrolase and mono-O-glucosyltransferase activity by using UDP-glucose as a sugar donor substrate. Is able to glucosylate histones H4 and H3.1 in vitro, but it is unlikely that histones are the natural substrates for SetA. May glycosylate a component of the host cell vesicle trafficking machinery during L.pneumophila infection. Binds with high specificity to phosphatidylinositol 3-phosphate (PtdIns(3)P), (with a dissociation constant value of 809 nM), which guides SetA to the cytosolic leaflet of the early phagosome of the host cell. This Legionella pneumophila subsp. pneumophila (strain Philadelphia 1 / ATCC 33152 / DSM 7513) protein is Subversion of eukaryotic traffic protein A (setA).